The chain runs to 297 residues: Mitochondrial ornithine transporter 1 (297 aa).

3 Solcar repeats span residues 15-97 (GSPA…LKLT), 102-205 (DPTL…FKKN), and 212-292 (KPHF…FRET). Transmembrane regions (helical) follow at residues 18 to 38 (ASTFSAALVSSAISNVIGYPL), 72 to 91 (GLTLPLISATLSRSVSFTVY), 107 to 127 (YFISGLGTGTFISLFACPFEY), 184 to 204 (HLTRDALGSACYFTIYETFKK), 215 to 235 (FAYAFSGAFCGALSWILVFPV), and 264 to 285 (IYRGIGISLMRSALINSCNFTL).

It belongs to the mitochondrial carrier (TC 2.A.29) family.

It localises to the mitochondrion inner membrane. Required for arginine biosynthesis. Transports ornithine synthesized from glutamate in the mitochondrial matrix to the cytosol, where it is converted to arginine. This Schizosaccharomyces pombe (strain 972 / ATCC 24843) (Fission yeast) protein is Mitochondrial ornithine transporter 1.